Here is a 284-residue protein sequence, read N- to C-terminus: 2-dehydro-3-deoxyphosphooctonate aldolase (284 aa).

It belongs to the KdsA family.

The protein resides in the cytoplasm. The catalysed reaction is D-arabinose 5-phosphate + phosphoenolpyruvate + H2O = 3-deoxy-alpha-D-manno-2-octulosonate-8-phosphate + phosphate. It functions in the pathway carbohydrate biosynthesis; 3-deoxy-D-manno-octulosonate biosynthesis; 3-deoxy-D-manno-octulosonate from D-ribulose 5-phosphate: step 2/3. It participates in bacterial outer membrane biogenesis; lipopolysaccharide biosynthesis. The polypeptide is 2-dehydro-3-deoxyphosphooctonate aldolase (Enterobacter sp. (strain 638)).